A 425-amino-acid chain; its full sequence is Histidine--tRNA ligase (425 aa).

The protein belongs to the class-II aminoacyl-tRNA synthetase family. As to quaternary structure, homodimer.

The protein resides in the cytoplasm. The catalysed reaction is tRNA(His) + L-histidine + ATP = L-histidyl-tRNA(His) + AMP + diphosphate + H(+). The polypeptide is Histidine--tRNA ligase (Shewanella sp. (strain MR-7)).